A 658-amino-acid chain; its full sequence is UvrABC system protein B (658 aa).

One can recognise a Helicase ATP-binding domain in the interval 26–413 (EGINSGKKKQ…SPEVIEQIIR (388 aa)). An ATP-binding site is contributed by 39–46 (GATGTGKT). Positions 92–115 (YYDYYQPEAYVPQTDTFIEKDAQI) match the Beta-hairpin motif. The Helicase C-terminal domain occupies 430 to 596 (QIDDLLGEIQ…TIQKGVRDVI (167 aa)). The region spanning 622-657 (EKTIAKMEAEMKEAAKALDFERAAELRDLLLELKAE) is the UVR domain.

Belongs to the UvrB family. As to quaternary structure, forms a heterotetramer with UvrA during the search for lesions. Interacts with UvrC in an incision complex.

The protein resides in the cytoplasm. The UvrABC repair system catalyzes the recognition and processing of DNA lesions. A damage recognition complex composed of 2 UvrA and 2 UvrB subunits scans DNA for abnormalities. Upon binding of the UvrA(2)B(2) complex to a putative damaged site, the DNA wraps around one UvrB monomer. DNA wrap is dependent on ATP binding by UvrB and probably causes local melting of the DNA helix, facilitating insertion of UvrB beta-hairpin between the DNA strands. Then UvrB probes one DNA strand for the presence of a lesion. If a lesion is found the UvrA subunits dissociate and the UvrB-DNA preincision complex is formed. This complex is subsequently bound by UvrC and the second UvrB is released. If no lesion is found, the DNA wraps around the other UvrB subunit that will check the other stand for damage. The chain is UvrABC system protein B from Bacillus cereus (strain ATCC 10987 / NRS 248).